The following is a 398-amino-acid chain: Carbamoyl phosphate synthase large chain (398 aa).

An ATP-grasp domain is found at 1 to 187 (KLGVPQPEGG…LAKIAAKVIV (187 aa)). A carbamoyl phosphate synthetic domain region spans residues 1–255 (KLGVPQPEGG…YKAELAADNV (255 aa)). ATP is bound by residues arginine 32, aspartate 71, leucine 73, glutamate 78, glycine 103, valine 104, histidine 105, serine 106, glutamine 146, and glutamate 158. Residues glutamine 146, glutamate 158, and asparagine 160 each contribute to the Mg(2+) site. The Mn(2+) site is built by glutamine 146, glutamate 158, and asparagine 160. In terms of domain architecture, MGS-like spans 254–395 (NVLPLTGKVF…NEYHKEMEEE (142 aa)). The allosteric domain stretch occupies residues 256 to 398 (LPLTGKVFLS…HKEMEEENKV (143 aa)).

This sequence belongs to the CarB family. In terms of assembly, composed of two chains; the small (or glutamine) chain promotes the hydrolysis of glutamine to ammonia, which is used by the large (or ammonia) chain to synthesize carbamoyl phosphate. Tetramer of heterodimers (alpha,beta)4. Mg(2+) serves as cofactor. Mn(2+) is required as a cofactor.

The enzyme catalyses hydrogencarbonate + L-glutamine + 2 ATP + H2O = carbamoyl phosphate + L-glutamate + 2 ADP + phosphate + 2 H(+). It catalyses the reaction hydrogencarbonate + NH4(+) + 2 ATP = carbamoyl phosphate + 2 ADP + phosphate + 2 H(+). Its pathway is amino-acid biosynthesis; L-arginine biosynthesis; carbamoyl phosphate from bicarbonate: step 1/1. The protein operates within pyrimidine metabolism; UMP biosynthesis via de novo pathway; (S)-dihydroorotate from bicarbonate: step 1/3. Its function is as follows. Large subunit of the glutamine-dependent carbamoyl phosphate synthetase (CPSase). CPSase catalyzes the formation of carbamoyl phosphate from the ammonia moiety of glutamine, carbonate, and phosphate donated by ATP, constituting the first step of 2 biosynthetic pathways, one leading to arginine and/or urea and the other to pyrimidine nucleotides. The large subunit (synthetase) binds the substrates ammonia (free or transferred from glutamine from the small subunit), hydrogencarbonate and ATP and carries out an ATP-coupled ligase reaction, activating hydrogencarbonate by forming carboxy phosphate which reacts with ammonia to form carbamoyl phosphate. The protein is Carbamoyl phosphate synthase large chain of Methanosarcina barkeri.